The chain runs to 342 residues: S-adenosylmethionine:tRNA ribosyltransferase-isomerase (342 aa).

This sequence belongs to the QueA family. Monomer.

The protein resides in the cytoplasm. It carries out the reaction 7-aminomethyl-7-carbaguanosine(34) in tRNA + S-adenosyl-L-methionine = epoxyqueuosine(34) in tRNA + adenine + L-methionine + 2 H(+). It functions in the pathway tRNA modification; tRNA-queuosine biosynthesis. Functionally, transfers and isomerizes the ribose moiety from AdoMet to the 7-aminomethyl group of 7-deazaguanine (preQ1-tRNA) to give epoxyqueuosine (oQ-tRNA). This is S-adenosylmethionine:tRNA ribosyltransferase-isomerase from Bacillus licheniformis (strain ATCC 14580 / DSM 13 / JCM 2505 / CCUG 7422 / NBRC 12200 / NCIMB 9375 / NCTC 10341 / NRRL NRS-1264 / Gibson 46).